The primary structure comprises 630 residues: Pentatricopeptide repeat-containing protein At2g03880, mitochondrial (630 aa).

A mitochondrion-targeting transit peptide spans 1-76 (MKSVMSKIKL…LIKCCISNRA (76 aa)). PPR repeat units lie at residues 60 to 94 (DSATYSELIKCCISNRAVHEGNLICRHLYFNGHRP), 95 to 125 (MMFLVNVLINMYVKFNLLNDAHQLFDQMPQR), 126 to 160 (NVISWTTMISAYSKCKIHQKALELLVLMLRDNVRP), 161 to 192 (NVYTYSSVLRSCNGMSDVRMLHCGIIKEGLES), 193 to 223 (DVFVRSALIDVFAKLGEPEDALSVFDEMVTG), 224 to 258 (DAIVWNSIIGGFAQNSRSDVALELFKRMKRAGFIA), 259 to 289 (EQATLTSVLRACTGLALLELGMQAHVHIVKY), 292 to 322 (DLILNNALVDMYCKCGSLEDALRVFNQMKER), 323 to 357 (DVITWSTMISGLAQNGYSQEALKLFERMKSSGTKP), 358 to 388 (NYITIVGVLFACSHAGLLEDGWYYFRSMKKL), and 394 to 424 (VREHYGCMIDLLGKAGKLDDAVKLLNEMECE). Positions 429–504 (TWRTLLGACR…EPGCSWIEVN (76 aa)) are type E motif. Residues 505–535 (KQIHAFIIGDNSHPQIVEVSKKLNQLIHRLT) are type E(+) motif. Positions 536–630 (GIGYVPETNF…DGKCSCGDYW (95 aa)) are type DYW motif.

Belongs to the PPR family. PCMP-H subfamily.

It is found in the mitochondrion. This Arabidopsis thaliana (Mouse-ear cress) protein is Pentatricopeptide repeat-containing protein At2g03880, mitochondrial (PCMP-H44).